A 943-amino-acid chain; its full sequence is Coiled-coil and C2 domain-containing protein 1A (943 aa).

Thr-91 is modified (phosphothreonine). 2 disordered regions span residues 186–250 and 300–337; these read NEAD…CSPL and DLSR…VPQP. Composition is skewed to low complexity over residues 195–206 and 229–238; these read ASGKGAAAGHSH and APSTTTPTSA. Ser-248 carries the phosphoserine modification. Positions 304–319 are enriched in pro residues; the sequence is LPPPPDQLSPEPPLPA. The stretch at 339 to 385 forms a coiled coil; sequence RNLLEALEQRMERYHVAAAQAKAKGDQRKARMHERIVKQYQDAIRAH. The interval 430 to 483 is disordered; sequence NHDEGSDDEEEETPKKQNTPAASTTQLKSSPSKAPPSGPAPAGKAAPKGTSNRA. Phosphoserine is present on Ser-435. Positions 445–456 are enriched in polar residues; the sequence is KQNTPAASTTQL. The span at 469 to 478 shows a compositional bias: low complexity; that stretch reads APAGKAAPKG. Positions 477–510 form a coiled coil; that stretch reads KGTSNRAQQQLAFLEGRKKQLLQAALRAKQKNDV. The C2 domain maps to 630 to 764; it reads RFEQRTFSVI…ETACEVHEIL (135 aa).

It belongs to the CC2D1 family. Highly expressed in brain, expression is enriched in the gray matter and strongest in the olfactory bulb.

The protein resides in the cytoplasm. The protein localises to the nucleus. Its subcellular location is the cytoskeleton. It localises to the microtubule organizing center. It is found in the centrosome. Transcription factor that binds specifically to the DRE (dual repressor element) and represses HTR1A gene transcription in neuronal cells. The combination of calcium and ATP specifically inactivates the binding with FRE. May play a role in the altered regulation of HTR1A associated with anxiety and major depression. Mediates HDAC-independent repression of HTR1A promoter in neuronal cell. Performs essential function in controlling functional maturation of synapses. The protein is Coiled-coil and C2 domain-containing protein 1A (Cc2d1a) of Mus musculus (Mouse).